The primary structure comprises 175 residues: MSVSTPERGGAEQGKGPAIARTRAGRQSRIVELLSAHAVRSQSELAALLAAEGIETTQATLSRDLDELGAVKLRAADGGAGVYVVPEDGSPVRGVTGGTDRLSKLLGDLLVSTDASGNIAVLRTPPGAAGYLASALDRAALPYVVGTIAGDDTIAVIAREPLTGAELAAKIEELA.

The interval 1–23 (MSVSTPERGGAEQGKGPAIARTR) is disordered.

The protein belongs to the ArgR family.

The protein resides in the cytoplasm. It participates in amino-acid biosynthesis; L-arginine biosynthesis [regulation]. Regulates arginine biosynthesis genes. In Nocardia farcinica (strain IFM 10152), this protein is Arginine repressor.